Reading from the N-terminus, the 263-residue chain is Thiazole synthase (263 aa).

Lys100 acts as the Schiff-base intermediate with DXP in catalysis. 1-deoxy-D-xylulose 5-phosphate contacts are provided by residues Gly161, Ala188 to Gly189, and Asn210 to Ser211.

Belongs to the ThiG family. Homotetramer. Forms heterodimers with either ThiH or ThiS.

Its subcellular location is the cytoplasm. The enzyme catalyses [ThiS sulfur-carrier protein]-C-terminal-Gly-aminoethanethioate + 2-iminoacetate + 1-deoxy-D-xylulose 5-phosphate = [ThiS sulfur-carrier protein]-C-terminal Gly-Gly + 2-[(2R,5Z)-2-carboxy-4-methylthiazol-5(2H)-ylidene]ethyl phosphate + 2 H2O + H(+). It participates in cofactor biosynthesis; thiamine diphosphate biosynthesis. Functionally, catalyzes the rearrangement of 1-deoxy-D-xylulose 5-phosphate (DXP) to produce the thiazole phosphate moiety of thiamine. Sulfur is provided by the thiocarboxylate moiety of the carrier protein ThiS. In vitro, sulfur can be provided by H(2)S. The sequence is that of Thiazole synthase from Pseudoalteromonas translucida (strain TAC 125).